The primary structure comprises 457 residues: uncharacterized protein (457 aa).

A run of 14 helical transmembrane segments spans residues 15–35, 54–74, 87–107, 112–132, 144–164, 166–186, 205–225, 229–249, 269–289, 308–328, 334–354, 357–377, 400–420, and 428–448; these read YGAILTIVIGISMAVLDGAIA, IWVVNAYQIAIVISLLSFSFL, GLVVFLLSSLFCALSDSLQML, VIQGFGGAALMSVNTALIRLI, INSFIVAVSSAAGPTIAAAIL, IASWKWLFLINVPLGIIALLL, LPSAVMNALTFGLLITALSGF, QSLTLIAAELVVMVVVGIFFI, LFSLSICTSVCSFCAQMLAMV, LLLTPWPLATMVMAPLAGYLI, GLLGALGLFIMAAGLFSLVLL, SPADINIIWPMILCGAGFGLF, MLGTARLLGQSSGAALVALML, and THVSLMAAAILAVIAACVSGL.

Belongs to the major facilitator superfamily. TCR/Tet family.

It is found in the cell inner membrane. This is an uncharacterized protein from Escherichia coli (strain K12).